We begin with the raw amino-acid sequence, 318 residues long: uncharacterized protein (318 aa).

Helical transmembrane passes span 112–132 (VIGV…PVFL), 147–167 (IAIE…FLSM), 209–229 (CGSS…LLVP), and 237–257 (VIDR…VLQL).

The protein localises to the cell membrane. This is an uncharacterized protein from Bacillus subtilis (strain 168).